Reading from the N-terminus, the 82-residue chain is Large ribosomal subunit protein bL31B (82 aa).

The protein belongs to the bacterial ribosomal protein bL31 family. Type B subfamily. In terms of assembly, part of the 50S ribosomal subunit after the end of exponential growth.

In terms of biological role, while neither of the L31 paralogs is essential, this protein does not seem to function as the main L31 protein. Has a higher affinity for 70S ribosomes than the zinc-containing L31 paralog; is able to displace it to varying extents, even under zinc-replete conditions. This is Large ribosomal subunit protein bL31B (rpmE2) from Bacillus subtilis (strain 168).